Here is a 1155-residue protein sequence, read N- to C-terminus: PAN2-PAN3 deadenylation complex catalytic subunit pan2 (1155 aa).

WD repeat units lie at residues 102-145 (THED…DKLP) and 276-315 (ANVSFMLGIDLSPSGEALAINDAECAIHLWGSPSKVHFNE). A linker region spans residues 316-452 (MSKEVEFADV…GTKLNGEAED (137 aa)). Positions 453 to 822 (DPLLKYSNVE…VPCVLAYQVK (370 aa)) constitute a USP domain. The 179-residue stretch at 871-1049 (VALDTEFVDL…IEDARMALRL (179 aa)) folds into the Exonuclease domain. 4 residues coordinate a divalent metal cation: Asp-874, Glu-876, Asp-983, and Asp-1042. The tract at residues 1095 to 1155 (TAVTMQNNSG…GDFFGGSPLK (61 aa)) is disordered. Residues 1097–1106 (VTMQNNSGRN) are compositionally biased toward polar residues. Low complexity predominate over residues 1107-1124 (TPSTPEVTAPTASAPTTP).

It belongs to the peptidase C19 family. PAN2 subfamily. In terms of assembly, forms a heterotrimer with an asymmetric homodimer of the regulatory subunit pan3 to form the poly(A)-nuclease (PAN) deadenylation complex. A divalent metal cation is required as a cofactor.

Its subcellular location is the cytoplasm. The enzyme catalyses Exonucleolytic cleavage of poly(A) to 5'-AMP.. Positively regulated by the regulatory subunit pan3. In terms of biological role, catalytic subunit of the poly(A)-nuclease (PAN) deadenylation complex, one of two cytoplasmic mRNA deadenylases involved in mRNA turnover. PAN specifically shortens poly(A) tails of RNA and the activity is stimulated by poly(A)-binding protein pab1. PAN deadenylation is followed by rapid degradation of the shortened mRNA tails by the CCR4-NOT complex. Deadenylated mRNAs are then degraded by two alternative mechanisms, namely exosome-mediated 3'-5' exonucleolytic degradation, or deadenylation-dependent mRNA decaping and subsequent 5'-3' exonucleolytic degradation by xrn1. May also be involved in post-transcriptional maturation of mRNA poly(A) tails. This is PAN2-PAN3 deadenylation complex catalytic subunit pan2 from Aspergillus oryzae (strain ATCC 42149 / RIB 40) (Yellow koji mold).